Here is a 349-residue protein sequence, read N- to C-terminus: Bifunctional protein FolKE (349 aa).

The segment at 1 to 226 (MQTTYLSMGS…LFEIDSSKND (226 aa)) is 2-amino-4-hydroxy-6-hydroxymethyldihydropteridine pyrophosphokinase. The GTP cyclohydrolase 1 stretch occupies residues 226–349 (DSIVLIKDIP…KRMEFLESLL (124 aa)).

It in the N-terminal section; belongs to the HPPK family. In the C-terminal section; belongs to the GTP cyclohydrolase I family. As to quaternary structure, homomer.

The enzyme catalyses 6-hydroxymethyl-7,8-dihydropterin + ATP = (7,8-dihydropterin-6-yl)methyl diphosphate + AMP + H(+). The catalysed reaction is GTP + H2O = 7,8-dihydroneopterin 3'-triphosphate + formate + H(+). Its pathway is cofactor biosynthesis; 7,8-dihydroneopterin triphosphate biosynthesis; 7,8-dihydroneopterin triphosphate from GTP: step 1/1. The protein operates within cofactor biosynthesis; tetrahydrofolate biosynthesis; 2-amino-4-hydroxy-6-hydroxymethyl-7,8-dihydropteridine diphosphate from 7,8-dihydroneopterin triphosphate: step 4/4. The sequence is that of Bifunctional protein FolKE (folKE) from Lactococcus lactis subsp. cremoris (strain MG1363).